We begin with the raw amino-acid sequence, 106 residues long: Large ribosomal subunit protein uL24 (106 aa).

It belongs to the universal ribosomal protein uL24 family. Part of the 50S ribosomal subunit.

In terms of biological role, one of two assembly initiator proteins, it binds directly to the 5'-end of the 23S rRNA, where it nucleates assembly of the 50S subunit. Functionally, one of the proteins that surrounds the polypeptide exit tunnel on the outside of the subunit. The polypeptide is Large ribosomal subunit protein uL24 (Blochmanniella pennsylvanica (strain BPEN)).